Here is a 243-residue protein sequence, read N- to C-terminus: Cytochrome c oxidase subunit 2 (243 aa).

Residues 1–34 (MNNIIHNDAPTPWGIYFQDGASPVYDGIVELHDQ) are Mitochondrial intermembrane-facing. A helical transmembrane segment spans residues 35 to 55 (VLFYLLIVLVGVSWILFSTIL). Residues 56–74 (RFRGSGIVHKYHNHSTTIE) lie on the Mitochondrial matrix side of the membrane. A helical transmembrane segment spans residues 75–97 (FVWTVSPALLLIAIAFPSFKLLY). Over 98 to 243 (LMDEVIDPSI…EKFLSWLDNQ (146 aa)) the chain is Mitochondrial intermembrane. Cu cation is bound by residues His178, Cys213, Glu215, Cys217, His221, and Met224. Residue Glu215 participates in Mg(2+) binding.

Belongs to the cytochrome c oxidase subunit 2 family. Component of the cytochrome c oxidase (complex IV, CIV), a multisubunit enzyme composed of a catalytic core of 3 subunits and several supernumerary subunits. The complex exists as a monomer or a dimer and forms supercomplexes (SCs) in the inner mitochondrial membrane with ubiquinol-cytochrome c oxidoreductase (cytochrome b-c1 complex, complex III, CIII). It depends on Cu cation as a cofactor.

The protein resides in the mitochondrion inner membrane. It carries out the reaction 4 Fe(II)-[cytochrome c] + O2 + 8 H(+)(in) = 4 Fe(III)-[cytochrome c] + 2 H2O + 4 H(+)(out). Component of the cytochrome c oxidase, the last enzyme in the mitochondrial electron transport chain which drives oxidative phosphorylation. The respiratory chain contains 3 multisubunit complexes succinate dehydrogenase (complex II, CII), ubiquinol-cytochrome c oxidoreductase (cytochrome b-c1 complex, complex III, CIII) and cytochrome c oxidase (complex IV, CIV), that cooperate to transfer electrons derived from NADH and succinate to molecular oxygen, creating an electrochemical gradient over the inner membrane that drives transmembrane transport and the ATP synthase. Cytochrome c oxidase is the component of the respiratory chain that catalyzes the reduction of oxygen to water. Electrons originating from reduced cytochrome c in the intermembrane space (IMS) are transferred via the dinuclear copper A center (CU(A)) of subunit 2 and heme A of subunit 1 to the active site in subunit 1, a binuclear center (BNC) formed by heme A3 and copper B (CU(B)). The BNC reduces molecular oxygen to 2 water molecules using 4 electrons from cytochrome c in the IMS and 4 protons from the mitochondrial matrix. The protein is Cytochrome c oxidase subunit 2 of Pneumocystis carinii.